A 141-amino-acid chain; its full sequence is VLSPADKTNVKTTWDKLGGHAGEYGGEALERTFMSFPTTKTYFPHFDLSPGSAQVKAHGKKVADALTTAVAHIDDLPGALSALSDLHAYKLRVDPVNFKLLSHCLLVTLACHHPAEFTPAVHASLDKFFSTVSTVLTSKYR.

The Globin domain maps to 1 to 141 (VLSPADKTNV…VSTVLTSKYR (141 aa)). Serine 3 is subject to Phosphoserine. Lysine 7 carries the N6-succinyllysine modification. Threonine 8 carries the post-translational modification Phosphothreonine. Lysine 11 bears the N6-succinyllysine mark. Residue lysine 16 is modified to N6-acetyllysine; alternate. At lysine 16 the chain carries N6-succinyllysine; alternate. A Phosphotyrosine modification is found at tyrosine 24. Serine 35 is subject to Phosphoserine. Lysine 40 is modified (N6-succinyllysine). A Phosphoserine modification is found at serine 49. Histidine 58 lines the O2 pocket. Histidine 87 contributes to the heme b binding site. Serine 102 is subject to Phosphoserine. Threonine 108 carries the post-translational modification Phosphothreonine. Serine 124 is modified (phosphoserine). Residues threonine 134 and threonine 137 each carry the phosphothreonine modification. Serine 138 carries the post-translational modification Phosphoserine.

This sequence belongs to the globin family. As to quaternary structure, heterotetramer of two alpha chains and two beta chains. As to expression, red blood cells.

In terms of biological role, involved in oxygen transport from the lung to the various peripheral tissues. Functionally, hemopressin acts as an antagonist peptide of the cannabinoid receptor CNR1. Hemopressin-binding efficiently blocks cannabinoid receptor CNR1 and subsequent signaling. The polypeptide is Hemoglobin subunit alpha (HBA) (Odobenus rosmarus divergens (Pacific walrus)).